Here is a 459-residue protein sequence, read N- to C-terminus: RuvB-like helicase 1 (459 aa).

75-82 contributes to the ATP binding site; the sequence is GGPSTGKT.

The protein belongs to the RuvB family. May form heterododecamers with RVB2. Component of the SWR1 chromatin remodeling complex, the INO80 chromatin remodeling complex, and of the R2TP complex.

The protein resides in the nucleus. It carries out the reaction ATP + H2O = ADP + phosphate + H(+). Its function is as follows. DNA helicase which participates in several chromatin remodeling complexes, including the SWR1 and the INO80 complexes. The SWR1 complex mediates the ATP-dependent exchange of histone H2A for the H2A variant HZT1 leading to transcriptional regulation of selected genes by chromatin remodeling. The INO80 complex remodels chromatin by shifting nucleosomes and is involved in DNA repair. Also involved in pre-rRNA processing. This is RuvB-like helicase 1 (RVB1) from Eremothecium gossypii (strain ATCC 10895 / CBS 109.51 / FGSC 9923 / NRRL Y-1056) (Yeast).